The following is a 185-amino-acid chain: Elongation factor P (185 aa).

This sequence belongs to the elongation factor P family.

The protein localises to the cytoplasm. It functions in the pathway protein biosynthesis; polypeptide chain elongation. In terms of biological role, involved in peptide bond synthesis. Stimulates efficient translation and peptide-bond synthesis on native or reconstituted 70S ribosomes in vitro. Probably functions indirectly by altering the affinity of the ribosome for aminoacyl-tRNA, thus increasing their reactivity as acceptors for peptidyl transferase. The protein is Elongation factor P of Anoxybacillus flavithermus (strain DSM 21510 / WK1).